Reading from the N-terminus, the 179-residue chain is Protein U (179 aa).

Residues 1-25 form the signal peptide; that stretch reads MNAIKTAVAAVTAAASLVAFSPAEA.

The protein localises to the secreted. Its subcellular location is the spore. It is found in the perispore. Its function is as follows. A late-developmental spore coat protein. This chain is Protein U (pru), found in Myxococcus xanthus.